A 668-amino-acid polypeptide reads, in one-letter code: Exoribonuclease 2 (668 aa).

In terms of domain architecture, RNB spans 193–521; the sequence is RIEMTHVPFV…INHRMLKAVI (329 aa). The region spanning 568–650 is the S1 motif domain; that stretch reads QTCFTGEIFD…ENRSLVAKPT (83 aa).

This sequence belongs to the RNR ribonuclease family. RNase II subfamily.

It localises to the cytoplasm. It catalyses the reaction Exonucleolytic cleavage in the 3'- to 5'-direction to yield nucleoside 5'-phosphates.. Its function is as follows. Involved in mRNA degradation. Hydrolyzes single-stranded polyribonucleotides processively in the 3' to 5' direction. The protein is Exoribonuclease 2 of Vibrio parahaemolyticus serotype O3:K6 (strain RIMD 2210633).